The chain runs to 104 residues: Turripeptide OL55-like (104 aa).

In terms of processing, contains 8 disulfide bonds. As to expression, expressed by the venom duct.

The protein localises to the secreted. In terms of biological role, acts as a neurotoxin by inhibiting an ion channel. The sequence is that of Turripeptide OL55-like from Iotyrris cingulifera (Sea snail).